We begin with the raw amino-acid sequence, 244 residues long: ATP synthase subunit b 2 (244 aa).

The chain crosses the membrane as a helical span at residues 2–22; the sequence is LIDWFTIVAQIINFLILVFLL.

It belongs to the ATPase B chain family. In terms of assembly, F-type ATPases have 2 components, F(1) - the catalytic core - and F(0) - the membrane proton channel. F(1) has five subunits: alpha(3), beta(3), gamma(1), delta(1), epsilon(1). F(0) has four main subunits: a(1), b(1), b'(1) and c(10-14). The alpha and beta chains form an alternating ring which encloses part of the gamma chain. F(1) is attached to F(0) by a central stalk formed by the gamma and epsilon chains, while a peripheral stalk is formed by the delta, b and b' chains.

Its subcellular location is the cellular thylakoid membrane. In terms of biological role, f(1)F(0) ATP synthase produces ATP from ADP in the presence of a proton or sodium gradient. F-type ATPases consist of two structural domains, F(1) containing the extramembraneous catalytic core and F(0) containing the membrane proton channel, linked together by a central stalk and a peripheral stalk. During catalysis, ATP synthesis in the catalytic domain of F(1) is coupled via a rotary mechanism of the central stalk subunits to proton translocation. Component of the F(0) channel, it forms part of the peripheral stalk, linking F(1) to F(0). This chain is ATP synthase subunit b 2, found in Crocosphaera subtropica (strain ATCC 51142 / BH68) (Cyanothece sp. (strain ATCC 51142)).